A 348-amino-acid chain; its full sequence is Elongation factor Ts (348 aa).

Positions 80-83 are involved in Mg(2+) ion dislocation from EF-Tu; it reads TDFV.

This sequence belongs to the EF-Ts family.

It localises to the cytoplasm. In terms of biological role, associates with the EF-Tu.GDP complex and induces the exchange of GDP to GTP. It remains bound to the aminoacyl-tRNA.EF-Tu.GTP complex up to the GTP hydrolysis stage on the ribosome. This chain is Elongation factor Ts, found in Streptococcus mutans serotype c (strain ATCC 700610 / UA159).